A 166-amino-acid polypeptide reads, in one-letter code: CDP-archaeol synthase (166 aa).

5 helical membrane passes run 7 to 27, 55 to 75, 78 to 98, 116 to 136, and 138 to 158; these read LLLS…GPFI, LIVA…FFTA, TLIS…GAFI, LDFV…ITWY, and FLFI…VAYL.

It belongs to the CDP-archaeol synthase family. It depends on Mg(2+) as a cofactor.

Its subcellular location is the cell membrane. The enzyme catalyses 2,3-bis-O-(geranylgeranyl)-sn-glycerol 1-phosphate + CTP + H(+) = CDP-2,3-bis-O-(geranylgeranyl)-sn-glycerol + diphosphate. The protein operates within membrane lipid metabolism; glycerophospholipid metabolism. Catalyzes the formation of CDP-2,3-bis-(O-geranylgeranyl)-sn-glycerol (CDP-archaeol) from 2,3-bis-(O-geranylgeranyl)-sn-glycerol 1-phosphate (DGGGP) and CTP. This reaction is the third ether-bond-formation step in the biosynthesis of archaeal membrane lipids. This Saccharolobus islandicus (strain L.S.2.15 / Lassen #1) (Sulfolobus islandicus) protein is CDP-archaeol synthase.